We begin with the raw amino-acid sequence, 976 residues long: Vacuolar membrane protease (976 aa).

Residues 1–15 (MKLKSVFRSVLKYRK) lie on the Cytoplasmic side of the membrane. A helical membrane pass occupies residues 16-36 (TNLSLLLLITYSIITLLYIFD). Over 37 to 359 (HERYKLNLPK…KFFVISAKTL (323 aa)) the chain is Vacuolar. N-linked (GlcNAc...) asparagine glycans are attached at residues Asn-96 and Asn-121. The Zn(2+) site is built by His-156 and Asp-168. The N-linked (GlcNAc...) asparagine glycan is linked to Asn-189. The active-site Proton acceptor is the Glu-200. A Zn(2+)-binding site is contributed by Glu-201. 2 N-linked (GlcNAc...) asparagine glycosylation sites follow: Asn-212 and Asn-217. Residues Glu-226 and His-300 each coordinate Zn(2+). The helical transmembrane segment at 360-380 (FYWNCIFLLVSPVVAIGLYLI) threads the bilayer. Residues 381–392 (SRDRMTWKSHSW) are Cytoplasmic-facing. The chain crosses the membrane as a helical span at residues 393 to 412 (LSWTRFPLSLAAGIIVQKLF). At 413–428 (SNDIIRSNPLTFSRNY) the chain is on the vacuolar side. The chain crosses the membrane as a helical span at residues 429–449 (FWPISAFFTQVIFTSYVLINC). Over 450 to 461 (SNFFFPCADMKS) the chain is Cytoplasmic. A helical membrane pass occupies residues 462–482 (LSIIELFIILWTILLFTSKLL). Over 483-496 (YSSDYRYTGLYPLS) the chain is Vacuolar. A helical transmembrane segment spans residues 497-517 (IFFLLSTIAAILRLLALALGM). The Cytoplasmic portion of the chain corresponds to 518–627 (RTRKRLGREC…NSLKLEYTDY (110 aa)). The tract at residues 528 to 610 (RDHHSNYSSH…PLLKGSNSME (83 aa)) is disordered. Polar residues predominate over residues 549-558 (NLEQPQDQFT). Residues 559–570 (SSQDDQASIQDD) are compositionally biased toward low complexity. A compositionally biased stretch (basic and acidic residues) spans 582–601 (NVDEDHGMDSSSQQHDERVP). A helical transmembrane segment spans residues 628–648 (AWIIQFLLIVPIPSFILFNSV). Residues 649–668 (DVIMDALNHTVQEGSKATFD) lie on the Vacuolar side of the membrane. Asn-656 carries N-linked (GlcNAc...) asparagine glycosylation. Residues 669-689 (VLRFGMVGSILMALPILPFFY) form a helical membrane-spanning segment. Over 690-692 (KVN) the chain is Cytoplasmic. The helical transmembrane segment at 693-713 (YITISLTALLFLISASKTLLV) threads the bilayer. Topologically, residues 714-976 (HPFTNSNPLK…LVIVKDAIIL (263 aa)) are vacuolar. Residues Asn-768, Asn-796, Asn-811, Asn-866, and Asn-937 are each glycosylated (N-linked (GlcNAc...) asparagine).

This sequence belongs to the peptidase M28 family. Zn(2+) serves as cofactor.

Its subcellular location is the vacuole membrane. Its function is as follows. May be involved in vacuolar sorting and osmoregulation. This Saccharomyces cerevisiae (strain AWRI1631) (Baker's yeast) protein is Vacuolar membrane protease.